The primary structure comprises 578 residues: Arginine--tRNA ligase (578 aa).

The short motif at 125 to 135 (PNVAKKMHVGH) is the 'HIGH' region element.

The protein belongs to the class-I aminoacyl-tRNA synthetase family. Monomer.

The protein resides in the cytoplasm. It catalyses the reaction tRNA(Arg) + L-arginine + ATP = L-arginyl-tRNA(Arg) + AMP + diphosphate. The polypeptide is Arginine--tRNA ligase (Buchnera aphidicola subsp. Baizongia pistaciae (strain Bp)).